An 859-amino-acid polypeptide reads, in one-letter code: Envelope glycoprotein (859 aa).

Residues 1–6 (MVSIAF) constitute a propeptide that is removed on maturation. Residues 7–614 (YGGIPGGIST…KDLWSHIGNW (608 aa)) are Extracellular-facing. 13 N-linked (GlcNAc...) asparagine; by host glycosylation sites follow: Asn40, Asn112, Asn141, Asn148, Asn186, Asn214, Asn233, Asn244, Asn340, Asn368, Asn399, Asn406, and Asn411. Positions 446–466 (FGISAIVAAIVAATAIAASAT) are fusion peptide. N-linked (GlcNAc...) asparagine; by host glycosylation is found at Asn483 and Asn490. The tract at residues 498–513 (LIERQIKILYAMILQT) is immunosuppression. N-linked (GlcNAc...) asparagine; by host glycosylation is found at Asn550 and Asn557. Coiled coils occupy residues 576–624 (ILTT…SIIK) and 663–699 (KKFHHKHASREDTWDQAQHNIHLAGVTGGSGDKYYKQ). The chain crosses the membrane as a helical span at residues 615–635 (IPGLGASIIKYIVMFLLIYLL). The Cytoplasmic segment spans residues 636-859 (LTSSPKILRA…TSHVSMPQYV (224 aa)).

In terms of assembly, the mature envelope protein (Env) consists of a trimer of SU-TM heterodimers attached by noncovalent interactions or by a labile interchain disulfide bond. Post-translationally, specific enzymatic cleavages in vivo yield mature proteins. Envelope glycoproteins are synthesized as an inactive precursor that is N-glycosylated and processed likely by host cell furin or by a furin-like protease in the Golgi to yield the mature SU and TM proteins. The cleavage site between SU and TM requires the minimal sequence [KR]-X-[KR]-R.

It is found in the virion membrane. It localises to the host cell membrane. The surface protein (SU) attaches the virus to the host cell by binding to its receptor. This interaction triggers the refolding of the transmembrane protein (TM) and is thought to activate its fusogenic potential by unmasking its fusion peptide. Fusion occurs at the host cell plasma membrane. Its function is as follows. The transmembrane protein (TM) acts as a class I viral fusion protein. Under the current model, the protein has at least 3 conformational states: pre-fusion native state, pre-hairpin intermediate state, and post-fusion hairpin state. During viral and target cell membrane fusion, the coiled coil regions (heptad repeats) assume a trimer-of-hairpins structure, positioning the fusion peptide in close proximity to the C-terminal region of the ectodomain. The formation of this structure appears to drive apposition and subsequent fusion of viral and target cell membranes. Membranes fusion leads to delivery of the nucleocapsid into the cytoplasm. The chain is Envelope glycoprotein (env) from Equus asinus (Donkey).